The following is a 137-amino-acid chain: Small ribosomal subunit protein uS12 (137 aa).

Positions 1–43 are disordered; sequence MPTINQLVRKGRVSKTKKSDSPALNKGYNSFKKRMTDQNAPQK.

Belongs to the universal ribosomal protein uS12 family. Part of the 30S ribosomal subunit. Contacts proteins S8 and S17. May interact with IF1 in the 30S initiation complex.

With S4 and S5 plays an important role in translational accuracy. Its function is as follows. Interacts with and stabilizes bases of the 16S rRNA that are involved in tRNA selection in the A site and with the mRNA backbone. Located at the interface of the 30S and 50S subunits, it traverses the body of the 30S subunit contacting proteins on the other side and probably holding the rRNA structure together. The combined cluster of proteins S8, S12 and S17 appears to hold together the shoulder and platform of the 30S subunit. The sequence is that of Small ribosomal subunit protein uS12 from Oceanobacillus iheyensis (strain DSM 14371 / CIP 107618 / JCM 11309 / KCTC 3954 / HTE831).